The sequence spans 230 residues: 2,3-bisphosphoglycerate-dependent phosphoglycerate mutase (230 aa).

Residues 8–15 (RHGESEWN), 21–22 (TG), Arg60, 87–90 (ERHY), Lys98, 114–115 (RR), and 183–184 (GN) contribute to the substrate site. His9 (tele-phosphohistidine intermediate) is an active-site residue. The Proton donor/acceptor role is filled by Glu87.

This sequence belongs to the phosphoglycerate mutase family. BPG-dependent PGAM subfamily.

The catalysed reaction is (2R)-2-phosphoglycerate = (2R)-3-phosphoglycerate. It participates in carbohydrate degradation; glycolysis; pyruvate from D-glyceraldehyde 3-phosphate: step 3/5. Functionally, catalyzes the interconversion of 2-phosphoglycerate and 3-phosphoglycerate. The sequence is that of 2,3-bisphosphoglycerate-dependent phosphoglycerate mutase from Streptococcus pneumoniae (strain P1031).